A 465-amino-acid chain; its full sequence is Argininosuccinate lyase (465 aa).

It belongs to the lyase 1 family. Argininosuccinate lyase subfamily.

It localises to the cytoplasm. The enzyme catalyses 2-(N(omega)-L-arginino)succinate = fumarate + L-arginine. Its pathway is amino-acid biosynthesis; L-arginine biosynthesis; L-arginine from L-ornithine and carbamoyl phosphate: step 3/3. The sequence is that of Argininosuccinate lyase from Clostridium botulinum (strain Alaska E43 / Type E3).